The primary structure comprises 389 residues: Terminal nucleotidyltransferase 5D (389 aa).

This sequence belongs to the TENT family. In terms of tissue distribution, restricted to testis.

The enzyme catalyses RNA(n) + ATP = RNA(n)-3'-adenine ribonucleotide + diphosphate. Its function is as follows. Catalyzes the transfer of one adenosine molecule from an ATP to an mRNA poly(A) tail bearing a 3'-OH terminal group. The chain is Terminal nucleotidyltransferase 5D from Homo sapiens (Human).